Consider the following 295-residue polypeptide: Transcriptional regulator SirC (295 aa).

Residues Glu-195–Thr-292 form the HTH araC/xylS-type domain. 2 DNA-binding regions (H-T-H motif) span residues Ala-212–Glu-233 and Ile-259–Phe-282.

Its function is as follows. Positive regulator of the expression of the invasion-associated type III secretion system encoded within SPI-1 (pathogenicity island 1). This is Transcriptional regulator SirC (sirC) from Salmonella typhi.